A 144-amino-acid polypeptide reads, in one-letter code: Large ribosomal subunit protein uL13 (144 aa).

Belongs to the universal ribosomal protein uL13 family. As to quaternary structure, part of the 50S ribosomal subunit.

This protein is one of the early assembly proteins of the 50S ribosomal subunit, although it is not seen to bind rRNA by itself. It is important during the early stages of 50S assembly. The polypeptide is Large ribosomal subunit protein uL13 (Blochmanniella pennsylvanica (strain BPEN)).